The chain runs to 402 residues: NADH-quinone oxidoreductase subunit D (402 aa).

It belongs to the complex I 49 kDa subunit family. In terms of assembly, NDH-1 is composed of 14 different subunits. Subunits NuoB, C, D, E, F, and G constitute the peripheral sector of the complex.

Its subcellular location is the cell inner membrane. It catalyses the reaction a quinone + NADH + 5 H(+)(in) = a quinol + NAD(+) + 4 H(+)(out). Its function is as follows. NDH-1 shuttles electrons from NADH, via FMN and iron-sulfur (Fe-S) centers, to quinones in the respiratory chain. The immediate electron acceptor for the enzyme in this species is believed to be ubiquinone. Couples the redox reaction to proton translocation (for every two electrons transferred, four hydrogen ions are translocated across the cytoplasmic membrane), and thus conserves the redox energy in a proton gradient. This Rhodopseudomonas palustris (strain TIE-1) protein is NADH-quinone oxidoreductase subunit D.